The chain runs to 416 residues: Serine hydroxymethyltransferase (416 aa).

Residues leucine 121 and glycine 125–leucine 127 contribute to the (6S)-5,6,7,8-tetrahydrofolate site. Lysine 229 is modified (N6-(pyridoxal phosphate)lysine).

Belongs to the SHMT family. Homodimer. It depends on pyridoxal 5'-phosphate as a cofactor.

The protein resides in the cytoplasm. It catalyses the reaction (6R)-5,10-methylene-5,6,7,8-tetrahydrofolate + glycine + H2O = (6S)-5,6,7,8-tetrahydrofolate + L-serine. It functions in the pathway one-carbon metabolism; tetrahydrofolate interconversion. It participates in amino-acid biosynthesis; glycine biosynthesis; glycine from L-serine: step 1/1. Functionally, catalyzes the reversible interconversion of serine and glycine with tetrahydrofolate (THF) serving as the one-carbon carrier. This reaction serves as the major source of one-carbon groups required for the biosynthesis of purines, thymidylate, methionine, and other important biomolecules. Also exhibits THF-independent aldolase activity toward beta-hydroxyamino acids, producing glycine and aldehydes, via a retro-aldol mechanism. This Neisseria gonorrhoeae protein is Serine hydroxymethyltransferase.